A 372-amino-acid chain; its full sequence is Putative glutamate--cysteine ligase 2 (372 aa).

Belongs to the glutamate--cysteine ligase type 2 family. YbdK subfamily. In terms of assembly, homodimer.

It carries out the reaction L-cysteine + L-glutamate + ATP = gamma-L-glutamyl-L-cysteine + ADP + phosphate + H(+). Functionally, ATP-dependent carboxylate-amine ligase which exhibits weak glutamate--cysteine ligase activity. In Escherichia coli O157:H7, this protein is Putative glutamate--cysteine ligase 2 (ybdK).